A 417-amino-acid polypeptide reads, in one-letter code: Serine--tRNA ligase (417 aa).

An L-serine-binding site is contributed by 226 to 228; the sequence is TSE. ATP contacts are provided by residues 257-259 and V273; that span reads RRE. E280 lines the L-serine pocket. 344-347 lines the ATP pocket; the sequence is ELTS. Residue T379 participates in L-serine binding.

Belongs to the class-II aminoacyl-tRNA synthetase family. Type-1 seryl-tRNA synthetase subfamily. Homodimer. The tRNA molecule binds across the dimer.

The protein localises to the cytoplasm. The catalysed reaction is tRNA(Ser) + L-serine + ATP = L-seryl-tRNA(Ser) + AMP + diphosphate + H(+). It carries out the reaction tRNA(Sec) + L-serine + ATP = L-seryl-tRNA(Sec) + AMP + diphosphate + H(+). It functions in the pathway aminoacyl-tRNA biosynthesis; selenocysteinyl-tRNA(Sec) biosynthesis; L-seryl-tRNA(Sec) from L-serine and tRNA(Sec): step 1/1. In terms of biological role, catalyzes the attachment of serine to tRNA(Ser). Is also able to aminoacylate tRNA(Sec) with serine, to form the misacylated tRNA L-seryl-tRNA(Sec), which will be further converted into selenocysteinyl-tRNA(Sec). This Mycobacterium sp. (strain JLS) protein is Serine--tRNA ligase.